A 142-amino-acid chain; its full sequence is Sec-independent protein translocase protein TatB (142 aa).

Residues 2-22 (FANVGWGEMLVLVIAGLVILG) form a helical membrane-spanning segment. Positions 89–142 (DDSIFTGKFDQNGKSEKPEQKPEKPQSAPGPAAAVPDQPAGGRSGSTPYDTDAT) are disordered. Basic and acidic residues predominate over residues 99-112 (QNGKSEKPEQKPEK). Residues 133–142 (GSTPYDTDAT) are compositionally biased toward polar residues.

This sequence belongs to the TatB family. The Tat system comprises two distinct complexes: a TatABC complex, containing multiple copies of TatA, TatB and TatC subunits, and a separate TatA complex, containing only TatA subunits. Substrates initially bind to the TatABC complex, which probably triggers association of the separate TatA complex to form the active translocon.

Its subcellular location is the cell membrane. Functionally, part of the twin-arginine translocation (Tat) system that transports large folded proteins containing a characteristic twin-arginine motif in their signal peptide across membranes. Together with TatC, TatB is part of a receptor directly interacting with Tat signal peptides. TatB may form an oligomeric binding site that transiently accommodates folded Tat precursor proteins before their translocation. This chain is Sec-independent protein translocase protein TatB, found in Mycolicibacterium vanbaalenii (strain DSM 7251 / JCM 13017 / BCRC 16820 / KCTC 9966 / NRRL B-24157 / PYR-1) (Mycobacterium vanbaalenii).